Here is a 421-residue protein sequence, read N- to C-terminus: ATP-dependent RNA helicase RhlB (421 aa).

Residues 9–37 carry the Q motif motif; sequence QKFSDFALHPKVVEALEKKGFHNCTPIQA. One can recognise a Helicase ATP-binding domain in the interval 40 to 219; it reads LPLTLAGRDV…FEQMNNAEYI (180 aa). Position 53–60 (53–60) interacts with ATP; sequence AQTGTGKT. A DEAD box motif is present at residues 165–168; it reads DEAD. One can recognise a Helicase C-terminal domain in the interval 245-390; it reads RLLQTLIEEE…VSKYNPDALM (146 aa). A disordered region spans residues 392–421; that stretch reads DLPKPLRLTRPRTGNGPRRTGAPRNRRRSG. Residues 402–414 are compositionally biased toward low complexity; that stretch reads PRTGNGPRRTGAP.

It belongs to the DEAD box helicase family. RhlB subfamily. In terms of assembly, component of the RNA degradosome, which is a multiprotein complex involved in RNA processing and mRNA degradation.

The protein localises to the cytoplasm. It carries out the reaction ATP + H2O = ADP + phosphate + H(+). In terms of biological role, DEAD-box RNA helicase involved in RNA degradation. Has RNA-dependent ATPase activity and unwinds double-stranded RNA. This chain is ATP-dependent RNA helicase RhlB, found in Escherichia coli O157:H7 (strain EC4115 / EHEC).